The chain runs to 870 residues: MVSDFEPAGDQPTAIKDLVEGVDNNDRTQVLLGVTGSGKTFTMAKVIEETQRPALILAPNKTLAAQLYSEFKKFFPDNAVEYFVSYYDYYQPEAYVPRTDTFIEKESSINEQIDRMRHSATRSLLERDDVIIVASVSCIYGIGSVETYTAMTFQMQIGDRLDQRALLADLVAQQYKRQDINFVRGSFRVRGDTIEIFPAHLEDRAWRISMFGDEIEQITEFDPLTGQKTGELKSVKIYANSHYVTPRPTLNQAIKSIKEELKQRLVELERAGRLLEAQRLEQRTRFDLEMLEATGSCAGIENYSRYLTGRQPGDPPPTLFEYIPDNALVFIDESHVTVPQIGGMYRGDFRRKATLAEYGFRLPSCMDNRPLRFEEWDAMRPLSVAVSATPGGWEMEQSGGVFAEQVIRPTGLIDPPVEVRPAKSQVDDVVGEIRETTKAGYRTLVTVLTKRMAEDLTEYLHEQGVRVRYMHSDIDTLERIEILRDLRLGAFDVLVGINLLREGLDIPECGFVAILDADKEGFLRSETSLIQTIGRAARNVDGKVILYADQVTGSMERAMAETNRRREKQMEWNAANGITPESVKSRISDILDSVYEKDHVRADISQFTDSAGAMMGNNLKAHLDAMEKQMRDAAANLDFEKAARIRDEIKRLREMELSISEDPLAKYADMESPVSGREKGKHNKGVAKHRTAEEQERFRKLDEARAAEEAARAARPNLFRKPALDEMGADGAVPAKKPLFAKPSIDDMGPGTDMPTPAGAVSRSLFKKQSASEAHGSDFGIPGEPVRPLFKKNSLDEMTVRRTEKPVEGKVPAKPQPISHPVGAGRTDVKDRDDSAKPIVRQRAGIGSYEDPGDARREKRRPGKTGRPGK.

Positions 20 to 410 constitute a Helicase ATP-binding domain; the sequence is EGVDNNDRTQ…VFAEQVIRPT (391 aa). 33 to 40 provides a ligand contact to ATP; sequence GVTGSGKT. Positions 86 to 109 match the Beta-hairpin motif; it reads YYDYYQPEAYVPRTDTFIEKESSI. In terms of domain architecture, Helicase C-terminal spans 425–591; that stretch reads QVDDVVGEIR…SVKSRISDIL (167 aa). In terms of domain architecture, UVR spans 620 to 655; sequence KAHLDAMEKQMRDAAANLDFEKAARIRDEIKRLREM. Disordered regions lie at residues 671 to 698 and 741 to 870; these read ESPV…QERF and AKPS…RPGK. Residues 679–689 are compositionally biased toward basic residues; sequence KGKHNKGVAKH. 2 stretches are compositionally biased toward basic and acidic residues: residues 793-808 and 827-836; these read NSLD…KPVE and TDVKDRDDSA. The span at 858–870 shows a compositional bias: basic residues; the sequence is EKRRPGKTGRPGK.

The protein belongs to the UvrB family. In terms of assembly, forms a heterotetramer with UvrA during the search for lesions. Interacts with UvrC in an incision complex.

Its subcellular location is the cytoplasm. Functionally, the UvrABC repair system catalyzes the recognition and processing of DNA lesions. A damage recognition complex composed of 2 UvrA and 2 UvrB subunits scans DNA for abnormalities. Upon binding of the UvrA(2)B(2) complex to a putative damaged site, the DNA wraps around one UvrB monomer. DNA wrap is dependent on ATP binding by UvrB and probably causes local melting of the DNA helix, facilitating insertion of UvrB beta-hairpin between the DNA strands. Then UvrB probes one DNA strand for the presence of a lesion. If a lesion is found the UvrA subunits dissociate and the UvrB-DNA preincision complex is formed. This complex is subsequently bound by UvrC and the second UvrB is released. If no lesion is found, the DNA wraps around the other UvrB subunit that will check the other stand for damage. This Mesorhizobium japonicum (strain LMG 29417 / CECT 9101 / MAFF 303099) (Mesorhizobium loti (strain MAFF 303099)) protein is UvrABC system protein B.